The sequence spans 75 residues: Probable pilin MJ0431 (75 aa).

Residues 1–15 (MGKMKILKKLLSKKG) constitute a propeptide that is removed on maturation. Residues 16-24 (QLSMEVGVL) carry the QXSXEXXXL motif.

Post-translationally, the N-terminus is cleaved by the prepilin peptidase EppA, which recognizes the class III signal sequence.

It is found in the secreted. The protein resides in the cell surface. It localises to the fimbrium. This chain is Probable pilin MJ0431, found in Methanocaldococcus jannaschii (strain ATCC 43067 / DSM 2661 / JAL-1 / JCM 10045 / NBRC 100440) (Methanococcus jannaschii).